The primary structure comprises 77 residues: Epoxide hydrolase (77 aa).

Monomer.

The catalysed reaction is an epoxide + H2O = an ethanediol. Its function is as follows. This enzyme acts on aliphatic epoxides. Its substrates include epichlorohydrin, epibromohydrin, epoxyoctane and styrene epoxide. This chain is Epoxide hydrolase, found in Pseudomonas sp. (strain AD1).